Here is a 264-residue protein sequence, read N- to C-terminus: ATP synthase subunit a (264 aa).

Transmembrane regions (helical) follow at residues 39 to 59 (LDTLIISVVLGALFILIFYIV), 97 to 117 (VAPLALTIFIWVFLMNFMDLV), 139 to 159 (TADPTLTFAMSITVFVLVIFY), 205 to 225 (LFGNLFAGELIFILIALLPWW), and 239 to 259 (LLVITVQAFIFMMLTVVYISL).

The protein belongs to the ATPase A chain family. In terms of assembly, F-type ATPases have 2 components, CF(1) - the catalytic core - and CF(0) - the membrane proton channel. CF(1) has five subunits: alpha(3), beta(3), gamma(1), delta(1), epsilon(1). CF(0) has three main subunits: a(1), b(2) and c(9-12). The alpha and beta chains form an alternating ring which encloses part of the gamma chain. CF(1) is attached to CF(0) by a central stalk formed by the gamma and epsilon chains, while a peripheral stalk is formed by the delta and b chains.

The protein resides in the cell inner membrane. Functionally, key component of the proton channel; it plays a direct role in the translocation of protons across the membrane. The sequence is that of ATP synthase subunit a from Coxiella burnetii (strain RSA 331 / Henzerling II).